Here is a 382-residue protein sequence, read N- to C-terminus: V-set and immunoglobulin domain-containing protein 1 (382 aa).

The first 21 residues, 1 to 21 (MGLTFWKVFLILNCLAGQVNG), serve as a signal peptide directing secretion. Positions 22 to 133 (VQVTIPDSFV…FFGKNQGTIS (112 aa)) constitute an Ig-like V-type domain. At 22–234 (VQVTIPDSFV…DLTTPYPGIG (213 aa)) the chain is on the extracellular side. N-linked (GlcNAc...) asparagine glycosylation is present at Asn32. 2 disulfides stabilise this stretch: Cys43–Cys116 and Cys161–Cys211. The region spanning 140 to 227 (PSKPFCSIQG…GNSSCEIDLT (88 aa)) is the Ig-like C2-type domain. Asn200 and Asn219 each carry an N-linked (GlcNAc...) asparagine glycan. The helical transmembrane segment at 235–255 (IIVGAFVGTLIGVIIIISVVW) threads the bilayer. The Cytoplasmic portion of the chain corresponds to 256-382 (FVRRKVKAKG…FCDEEKVIKP (127 aa)). The interval 266–382 (KERKRNSKTT…FCDEEKVIKP (117 aa)) is disordered. The span at 273–285 (KTTTELEPMTKIN) shows a compositional bias: polar residues. A compositionally biased stretch (basic and acidic residues) spans 286 to 298 (QRTEGETMPREDA). Residues 327–341 (EPEPALQPTVEPPSG) show a composition bias toward pro residues.

It is found in the membrane. In Bos taurus (Bovine), this protein is V-set and immunoglobulin domain-containing protein 1 (VSIG1).